The chain runs to 503 residues: MARKPDISAVPVESAACQGPDPRRWWGLVVILAAQLLVVLDGTVVNIALPSVQRDLGMSDTSRQWVITAYTLAFGGLLLLGGRVADAFGRRRIFAVGILGFGLASLLGGAAPDPGTLFLARALQGVFAAALAPAALALINTLFTEPGERGKAFGVYGAVSGGGAAVGLLAGGLLTEYLDWRWCLYVNAPVALLALLGCRLLPRDRRTGRAVRLDLPGTLLGCGGLVAIVYAFAEAESGWGDPLVVRLLVLGVLMLVAFALVERRVQDPLLPPGVVAHRVRGGSFLVVGLPQIGLFGLFLFLTYYLQGILDYSPVLTGVAFLPLGLGIAVGSSLIAARLLPRTRPRTLIVGALLAAAAGMALLTRLEPDTPQVYLTHLLPAQILIGLGIGCMMMPAMHTATARVAPHEAGAAAAVVNSAQQVGGALGVALLNTVSTGATAAYLADHGTSPAATVDGTVHGYTVAIAFAVGVLLLTAVLAWVLIDSRTEAADETGSASVTPARPR.

Over 1-24 (MARKPDISAVPVESAACQGPDPRR) the chain is Cytoplasmic. Residues 25–45 (WWGLVVILAAQLLVVLDGTVV) traverse the membrane as a helical segment. The Extracellular portion of the chain corresponds to 46–64 (NIALPSVQRDLGMSDTSRQ). Residues 65–85 (WVITAYTLAFGGLLLLGGRVA) traverse the membrane as a helical segment. Residues 86 to 92 (DAFGRRR) are Cytoplasmic-facing. The helical transmembrane segment at 93–113 (IFAVGILGFGLASLLGGAAPD) threads the bilayer. Residues 114–122 (PGTLFLARA) lie on the Extracellular side of the membrane. The helical transmembrane segment at 123–143 (LQGVFAAALAPAALALINTLF) threads the bilayer. Over 144 to 152 (TEPGERGKA) the chain is Cytoplasmic. A helical transmembrane segment spans residues 153 to 173 (FGVYGAVSGGGAAVGLLAGGL). At 174–181 (LTEYLDWR) the chain is on the extracellular side. Residues 182–202 (WCLYVNAPVALLALLGCRLLP) form a helical membrane-spanning segment. Over 203–212 (RDRRTGRAVR) the chain is Cytoplasmic. Residues 213 to 233 (LDLPGTLLGCGGLVAIVYAFA) traverse the membrane as a helical segment. Residues 234 to 241 (EAESGWGD) lie on the Extracellular side of the membrane. Residues 242 to 262 (PLVVRLLVLGVLMLVAFALVE) traverse the membrane as a helical segment. Topologically, residues 263 to 280 (RRVQDPLLPPGVVAHRVR) are cytoplasmic. The helical transmembrane segment at 281–301 (GGSFLVVGLPQIGLFGLFLFL) threads the bilayer. Residues 302 to 313 (TYYLQGILDYSP) lie on the Extracellular side of the membrane. Residues 314–334 (VLTGVAFLPLGLGIAVGSSLI) traverse the membrane as a helical segment. Topologically, residues 335–346 (AARLLPRTRPRT) are cytoplasmic. The helical transmembrane segment at 347 to 367 (LIVGALLAAAAGMALLTRLEP) threads the bilayer. Residues 368-371 (DTPQ) lie on the Extracellular side of the membrane. The chain crosses the membrane as a helical span at residues 372–392 (VYLTHLLPAQILIGLGIGCMM). Over 393 to 422 (MPAMHTATARVAPHEAGAAAAVVNSAQQVG) the chain is Cytoplasmic. The chain crosses the membrane as a helical span at residues 423–443 (GALGVALLNTVSTGATAAYLA). The Extracellular portion of the chain corresponds to 444–461 (DHGTSPAATVDGTVHGYT). A helical membrane pass occupies residues 462–482 (VAIAFAVGVLLLTAVLAWVLI). At 483–503 (DSRTEAADETGSASVTPARPR) the chain is on the cytoplasmic side.

It belongs to the major facilitator superfamily. EmrB family.

The protein localises to the cell membrane. Its function is as follows. May be involved in active puromycin efflux energized by a proton-dependent electrochemical gradient. In addition, it could be implicated in secreting N-acetylpuromycin, the last intermediate of the puromycin biosynthesis pathway, to the environment. This is Puromycin resistance protein pur8 (pur8) from Streptomyces alboniger.